We begin with the raw amino-acid sequence, 186 residues long: Methyl-CpG-binding domain-containing protein 4 (186 aa).

The CW-type zinc finger occupies 22–77 (GRLIDTYAAQCDNCHKWRVIDSQEEYEDIRSKMLEDPFNCQKKQGMSCEEPADIDY). The short motif at 31 to 69 (QCDNCHKWRVIDSQEEYEDIRSKMLEDPFNCQKKQGMSC) is the MBD-associated domain (MAD) element. Cys-32, Cys-35, Cys-61, and Cys-69 together coordinate Zn(2+). Positions 83 to 153 (WVIDKPGLPK…GDFNFTVPKV (71 aa)) constitute an MBD domain. A disordered region spans residues 154 to 186 (MEDTVPPDPKLGSPFPSTTTTTSEKSSVKQSHN). Low complexity predominate over residues 166–178 (SPFPSTTTTTSEK).

In terms of tissue distribution, expressed in rosette leaves, buds, flowers, stems, mature seeds and roots.

Its subcellular location is the nucleus. Its function is as follows. Transcriptional regulator that binds CpG, CpNpN and CpNpG (N is A, T, or C) islands in promoters regardless the DNA methylation status. Plays probably a role in gene silencing. This is Methyl-CpG-binding domain-containing protein 4 (MBD4) from Arabidopsis thaliana (Mouse-ear cress).